Reading from the N-terminus, the 544-residue chain is Aspartokinase 2, chloroplastic (544 aa).

The transit peptide at 1–84 directs the protein to the chloroplast; sequence MASLQLYGVK…SSGTGKELTC (84 aa). Positions 87, 90, and 119 each coordinate ATP. Glu-203 is a substrate binding site. 2 consecutive ACT domains span residues 401-479 and 481-544; these read IAST…RRSI and SLIG…ETDP.

This sequence belongs to the aspartokinase family. In terms of tissue distribution, expressed in stems, leaves, floral organs and young seedlings.

The protein localises to the plastid. It is found in the chloroplast. It carries out the reaction L-aspartate + ATP = 4-phospho-L-aspartate + ADP. It participates in amino-acid biosynthesis; L-lysine biosynthesis via DAP pathway; (S)-tetrahydrodipicolinate from L-aspartate: step 1/4. It functions in the pathway amino-acid biosynthesis; L-methionine biosynthesis via de novo pathway; L-homoserine from L-aspartate: step 1/3. Its pathway is amino-acid biosynthesis; L-threonine biosynthesis; L-threonine from L-aspartate: step 1/5. With respect to regulation, allosterically inhibited by lysine, but not by S-adenosyl-L-methionine (SAM). K(0.5) for lysine in the presence of physiological concentrations of substrates is 12.5 uM. No inhibition by threonine or leucine and no activation or inhibition by alanine, cysteine, isoleucine, serine, valine, methionine, glutamine, asparagine, glutamic acid or arginine. Its function is as follows. Involved in the first step of essential amino acids lysine, threonine, methionine and isoleucine synthesis via the aspartate-family pathway. The polypeptide is Aspartokinase 2, chloroplastic (AK2) (Arabidopsis thaliana (Mouse-ear cress)).